A 303-amino-acid polypeptide reads, in one-letter code: Heme A synthase (303 aa).

Residues 1-8 (MFGKKNLK) lie on the Cytoplasmic side of the membrane. A helical membrane pass occupies residues 9–29 (WLGVVATLMMTFVQLGGALVT). The Extracellular segment spans residues 30–67 (KTGSADGCGSSWPLCHGALIPEFFPIDTIIELSHRAVS). A disulfide bridge links cysteine 37 with cysteine 44. Glutamate 60 is a catalytic residue. Histidine 63 contacts heme o. The helical transmembrane segment at 68–88 (ALSLLMVLWLVITAWKHIGYI) threads the bilayer. The Cytoplasmic segment spans residues 89–93 (KEIKP). The helical transmembrane segment at 94 to 114 (LSIISVGFLLLQALIGAAAVI) threads the bilayer. The Extracellular segment spans residues 115 to 125 (WQQNDYVLALH). Residue histidine 125 coordinates heme o. A helical membrane pass occupies residues 126–146 (FGISLISFSSVFLITLIIFSI). Over 147–163 (DQKYEAAELYIKKPLRR) the chain is Cytoplasmic. The helical transmembrane segment at 164 to 184 (LTWLMAIIIYCGVYTGALVRH) threads the bilayer. The Extracellular portion of the chain corresponds to 185–215 (ADASLAYGGWPLPFHDLVPHSEQDWVQLTHR). Position 214 (histidine 214) interacts with heme b. The helical transmembrane segment at 216 to 236 (IMAFIVFTIIMITYIHAVKNY) threads the bilayer. Over 237–244 (PNNRTVHY) the chain is Cytoplasmic. A helical transmembrane segment spans residues 245 to 265 (GYTAAFILVILQVITGALSIM). Residues 266–270 (TNVNL) lie on the Extracellular side of the membrane. The helical transmembrane segment at 271–291 (IIALFHALFITYLFGMTTYFI) threads the bilayer. Residue histidine 276 participates in heme b binding. The Cytoplasmic segment spans residues 292–303 (MLMLRSVRSDKQ).

This sequence belongs to the COX15/CtaA family. Type 1 subfamily. As to quaternary structure, interacts with CtaB. Heme b is required as a cofactor.

It localises to the cell membrane. It carries out the reaction Fe(II)-heme o + 2 A + H2O = Fe(II)-heme a + 2 AH2. It functions in the pathway porphyrin-containing compound metabolism; heme A biosynthesis; heme A from heme O: step 1/1. Its function is as follows. Catalyzes the conversion of heme O to heme A by two successive hydroxylations of the methyl group at C8. The first hydroxylation forms heme I, the second hydroxylation results in an unstable dihydroxymethyl group, which spontaneously dehydrates, resulting in the formyl group of heme A. The sequence is that of Heme A synthase from Staphylococcus aureus (strain bovine RF122 / ET3-1).